Here is a 154-residue protein sequence, read N- to C-terminus: Nucleoside diphosphate kinase (154 aa).

The ATP site is built by Lys12, Phe60, Arg88, Thr94, Arg105, and Asn115. His118 (pros-phosphohistidine intermediate) is an active-site residue.

The protein belongs to the NDK family. The cofactor is Mg(2+).

It is found in the cytoplasm. The catalysed reaction is a 2'-deoxyribonucleoside 5'-diphosphate + ATP = a 2'-deoxyribonucleoside 5'-triphosphate + ADP. The enzyme catalyses a ribonucleoside 5'-diphosphate + ATP = a ribonucleoside 5'-triphosphate + ADP. Major role in the synthesis of nucleoside triphosphates other than ATP. The ATP gamma phosphate is transferred to the NDP beta phosphate via a ping-pong mechanism, using a phosphorylated active-site intermediate. In Haloarcula marismortui (strain ATCC 43049 / DSM 3752 / JCM 8966 / VKM B-1809) (Halobacterium marismortui), this protein is Nucleoside diphosphate kinase.